Reading from the N-terminus, the 275-residue chain is Glutamate 5-kinase (275 aa).

ATP is bound at residue Lys-17. 3 residues coordinate substrate: Ser-57, Asp-144, and Asn-160. Residues Ser-180–Asp-181 and Thr-222–Lys-228 each bind ATP.

The protein belongs to the glutamate 5-kinase family.

The protein resides in the cytoplasm. It carries out the reaction L-glutamate + ATP = L-glutamyl 5-phosphate + ADP. It participates in amino-acid biosynthesis; L-proline biosynthesis; L-glutamate 5-semialdehyde from L-glutamate: step 1/2. Catalyzes the transfer of a phosphate group to glutamate to form L-glutamate 5-phosphate. The sequence is that of Glutamate 5-kinase from Streptococcus pyogenes serotype M12 (strain MGAS2096).